The following is a 229-amino-acid chain: Enolase-phosphatase E1 (229 aa).

A disordered region spans residues 206 to 229; it reads DRDPASHHPQVQRFDDIHPEQIPA. A compositionally biased stretch (basic and acidic residues) spans 218 to 229; it reads RFDDIHPEQIPA.

This sequence belongs to the HAD-like hydrolase superfamily. MasA/MtnC family. As to quaternary structure, monomer. The cofactor is Mg(2+).

It carries out the reaction 5-methylsulfanyl-2,3-dioxopentyl phosphate + H2O = 1,2-dihydroxy-5-(methylsulfanyl)pent-1-en-3-one + phosphate. Its pathway is amino-acid biosynthesis; L-methionine biosynthesis via salvage pathway; L-methionine from S-methyl-5-thio-alpha-D-ribose 1-phosphate: step 3/6. The protein operates within amino-acid biosynthesis; L-methionine biosynthesis via salvage pathway; L-methionine from S-methyl-5-thio-alpha-D-ribose 1-phosphate: step 4/6. Bifunctional enzyme that catalyzes the enolization of 2,3-diketo-5-methylthiopentyl-1-phosphate (DK-MTP-1-P) into the intermediate 2-hydroxy-3-keto-5-methylthiopentenyl-1-phosphate (HK-MTPenyl-1-P), which is then dephosphorylated to form the acireductone 1,2-dihydroxy-3-keto-5-methylthiopentene (DHK-MTPene). In Klebsiella oxytoca, this protein is Enolase-phosphatase E1.